The primary structure comprises 362 residues: 4-hydroxy-3-methylbut-2-en-1-yl diphosphate synthase (flavodoxin) (362 aa).

[4Fe-4S] cluster-binding residues include Cys-266, Cys-269, Cys-301, and Glu-308.

It belongs to the IspG family. Requires [4Fe-4S] cluster as cofactor.

The enzyme catalyses (2E)-4-hydroxy-3-methylbut-2-enyl diphosphate + oxidized [flavodoxin] + H2O + 2 H(+) = 2-C-methyl-D-erythritol 2,4-cyclic diphosphate + reduced [flavodoxin]. It participates in isoprenoid biosynthesis; isopentenyl diphosphate biosynthesis via DXP pathway; isopentenyl diphosphate from 1-deoxy-D-xylulose 5-phosphate: step 5/6. Converts 2C-methyl-D-erythritol 2,4-cyclodiphosphate (ME-2,4cPP) into 1-hydroxy-2-methyl-2-(E)-butenyl 4-diphosphate. The polypeptide is 4-hydroxy-3-methylbut-2-en-1-yl diphosphate synthase (flavodoxin) (Malacoplasma penetrans (strain HF-2) (Mycoplasma penetrans)).